The primary structure comprises 292 residues: 5,10-methylenetetrahydrofolate reductase (292 aa).

Catalysis depends on Glu28, which acts as the Proton donor/acceptor. Thr59 contributes to the NADH binding site. The FAD site is built by Tyr60, Ala62, His88, Arg118, Gly119, Asp120, Ala132, Tyr152, His156, Asp165, Asn168, Lys171, and Lys172. A (6S)-5-methyl-5,6,7,8-tetrahydrofolate-binding site is contributed by Asp120. Residue Gln183 coordinates NADH. Gln183 provides a ligand contact to (6S)-5-methyl-5,6,7,8-tetrahydrofolate.

This sequence belongs to the methylenetetrahydrofolate reductase family. FAD serves as cofactor.

It catalyses the reaction (6S)-5-methyl-5,6,7,8-tetrahydrofolate + NAD(+) = (6R)-5,10-methylene-5,6,7,8-tetrahydrofolate + NADH + H(+). The protein operates within one-carbon metabolism; tetrahydrofolate interconversion. Its pathway is amino-acid biosynthesis; L-methionine biosynthesis via de novo pathway. Functionally, catalyzes the NADH-dependent reduction of 5,10-methylenetetrahydrofolate to 5-methyltetrahydrofolate. Is required to provide the methyl group necessary for methionine synthetase to convert homocysteine to methionine; the methyl group is given by 5-methyltetrahydrofolate. The sequence is that of 5,10-methylenetetrahydrofolate reductase (metF) from Buchnera aphidicola subsp. Acyrthosiphon pisum (strain APS) (Acyrthosiphon pisum symbiotic bacterium).